We begin with the raw amino-acid sequence, 447 residues long: Trigger factor (447 aa).

One can recognise a PPIase FKBP-type domain in the interval 159-244 (GDMLLMQVES…VREIKEEKLP (86 aa)).

The protein belongs to the FKBP-type PPIase family. Tig subfamily.

It localises to the cytoplasm. The enzyme catalyses [protein]-peptidylproline (omega=180) = [protein]-peptidylproline (omega=0). Functionally, involved in protein export. Acts as a chaperone by maintaining the newly synthesized protein in an open conformation. Functions as a peptidyl-prolyl cis-trans isomerase. The protein is Trigger factor of Dehalococcoides mccartyi (strain ATCC BAA-2100 / JCM 16839 / KCTC 5957 / BAV1).